Consider the following 166-residue polypeptide: Ribosome maturation factor RimM (166 aa).

Residues 91–163 (DDGFYDHELE…TCVITPPEGL (73 aa)) enclose the PRC barrel domain.

This sequence belongs to the RimM family. As to quaternary structure, binds ribosomal protein uS19.

Its subcellular location is the cytoplasm. An accessory protein needed during the final step in the assembly of 30S ribosomal subunit, possibly for assembly of the head region. Essential for efficient processing of 16S rRNA. May be needed both before and after RbfA during the maturation of 16S rRNA. It has affinity for free ribosomal 30S subunits but not for 70S ribosomes. This Corynebacterium diphtheriae (strain ATCC 700971 / NCTC 13129 / Biotype gravis) protein is Ribosome maturation factor RimM.